Here is a 146-residue protein sequence, read N- to C-terminus: Hemoglobin subunit beta (146 aa).

An N-acetylvaline modification is found at V1. The 145-residue stretch at 2-146 folds into the Globin domain; it reads HLTPEEKNAV…VANALAHKYH (145 aa). At T12 the chain carries Phosphothreonine. S44 bears the Phosphoserine mark. Position 59 is an N6-acetyllysine (K59). A heme b-binding site is contributed by H63. K82 is subject to N6-acetyllysine. H92 lines the heme b pocket. C93 bears the S-nitrosocysteine mark. K144 carries the post-translational modification N6-acetyllysine.

Belongs to the globin family. Heterotetramer of two alpha chains and two beta chains. In terms of tissue distribution, red blood cells.

Its function is as follows. Involved in oxygen transport from the lung to the various peripheral tissues. The chain is Hemoglobin subunit beta (HBB) from Papio cynocephalus (Yellow baboon).